A 326-amino-acid polypeptide reads, in one-letter code: Zona pellucida-binding protein 2 (326 aa).

The N-terminal stretch at 1 to 19 (MLAWALLYAVLWSLAGVGS) is a signal peptide. Asn86, Asn220, and Asn256 each carry an N-linked (GlcNAc...) asparagine glycan.

The protein belongs to the zona pellucida-binding protein Sp38 family. Post-translationally, N-glycosylated. Expressed specifically in male germ cells.

It localises to the cytoplasmic vesicle. The protein localises to the secretory vesicle. It is found in the acrosome. Its subcellular location is the secreted. Functionally, is implicated in sperm-oocyte interaction during fertilization. The protein is Zona pellucida-binding protein 2 (Zpbp2) of Mus musculus (Mouse).